Here is a 349-residue protein sequence, read N- to C-terminus: Protein-glutamate methylesterase/protein-glutamine glutaminase (349 aa).

The region spanning 5 to 122 is the Response regulatory domain; the sequence is RVLSVDDSAL…REGMLAYSEM (118 aa). At Asp-56 the chain carries 4-aspartylphosphate. One can recognise a CheB-type methylesterase domain in the interval 152 to 344; the sequence is LLSSEKLIAI…QQMLAKISAG (193 aa). Active-site residues include Ser-164, His-190, and Asp-286.

It belongs to the CheB family. Post-translationally, phosphorylated by CheA. Phosphorylation of the N-terminal regulatory domain activates the methylesterase activity.

The protein resides in the cytoplasm. The catalysed reaction is [protein]-L-glutamate 5-O-methyl ester + H2O = L-glutamyl-[protein] + methanol + H(+). The enzyme catalyses L-glutaminyl-[protein] + H2O = L-glutamyl-[protein] + NH4(+). Functionally, involved in chemotaxis. Part of a chemotaxis signal transduction system that modulates chemotaxis in response to various stimuli. Catalyzes the demethylation of specific methylglutamate residues introduced into the chemoreceptors (methyl-accepting chemotaxis proteins or MCP) by CheR. Also mediates the irreversible deamidation of specific glutamine residues to glutamic acid. This chain is Protein-glutamate methylesterase/protein-glutamine glutaminase, found in Escherichia coli O6:H1 (strain CFT073 / ATCC 700928 / UPEC).